Reading from the N-terminus, the 295-residue chain is Pyridoxal 5'-phosphate synthase subunit PdxS (295 aa).

Aspartate 25 provides a ligand contact to D-ribose 5-phosphate. Lysine 82 serves as the catalytic Schiff-base intermediate with D-ribose 5-phosphate. Residue glycine 154 coordinates D-ribose 5-phosphate. Arginine 166 provides a ligand contact to D-glyceraldehyde 3-phosphate. D-ribose 5-phosphate-binding positions include glycine 215 and 236–237 (GS).

It belongs to the PdxS/SNZ family. In terms of assembly, in the presence of PdxT, forms a dodecamer of heterodimers.

It carries out the reaction aldehydo-D-ribose 5-phosphate + D-glyceraldehyde 3-phosphate + L-glutamine = pyridoxal 5'-phosphate + L-glutamate + phosphate + 3 H2O + H(+). It participates in cofactor biosynthesis; pyridoxal 5'-phosphate biosynthesis. Functionally, catalyzes the formation of pyridoxal 5'-phosphate from ribose 5-phosphate (RBP), glyceraldehyde 3-phosphate (G3P) and ammonia. The ammonia is provided by the PdxT subunit. Can also use ribulose 5-phosphate and dihydroxyacetone phosphate as substrates, resulting from enzyme-catalyzed isomerization of RBP and G3P, respectively. The sequence is that of Pyridoxal 5'-phosphate synthase subunit PdxS from Staphylococcus saprophyticus subsp. saprophyticus (strain ATCC 15305 / DSM 20229 / NCIMB 8711 / NCTC 7292 / S-41).